A 108-amino-acid polypeptide reads, in one-letter code: MKTLLLTLVVVTIVCLDLAYTRKCYKTHPYKSEPCAPGENLCYTKTWCDFRCSQLGKAVELGCAATCPTTKPYEEVTCCSTDDCNRFPNWERPRPRPRGLLSSIMDHP.

A signal peptide spans 1–21; the sequence is MKTLLLTLVVVTIVCLDLAYT. Cystine bridges form between Cys24/Cys42, Cys35/Cys63, Cys48/Cys52, Cys67/Cys78, and Cys79/Cys84.

This sequence belongs to the three-finger toxin family. Long-chain subfamily. Type II alpha-neurotoxin sub-subfamily. In terms of tissue distribution, expressed by the venom gland.

The protein resides in the secreted. Functionally, binds with high affinity to muscular (alpha-1/CHRNA1) and neuronal (alpha-7/CHRNA7) nicotinic acetylcholine receptor (nAChR) and inhibits acetylcholine from binding to the receptor, thereby impairing neuromuscular and neuronal transmission. The sequence is that of Long neurotoxin 43 from Drysdalia coronoides (White-lipped snake).